The sequence spans 68 residues: Large ribosomal subunit protein bL35 (68 aa).

It belongs to the bacterial ribosomal protein bL35 family.

The chain is Large ribosomal subunit protein bL35 from Onion yellows phytoplasma (strain OY-M).